The primary structure comprises 245 residues: 1-(5-phosphoribosyl)-5-[(5-phosphoribosylamino)methylideneamino] imidazole-4-carboxamide isomerase (245 aa).

The active-site Proton acceptor is aspartate 8. The Proton donor role is filled by aspartate 131.

The protein belongs to the HisA/HisF family.

The protein resides in the cytoplasm. It carries out the reaction 1-(5-phospho-beta-D-ribosyl)-5-[(5-phospho-beta-D-ribosylamino)methylideneamino]imidazole-4-carboxamide = 5-[(5-phospho-1-deoxy-D-ribulos-1-ylimino)methylamino]-1-(5-phospho-beta-D-ribosyl)imidazole-4-carboxamide. It functions in the pathway amino-acid biosynthesis; L-histidine biosynthesis; L-histidine from 5-phospho-alpha-D-ribose 1-diphosphate: step 4/9. In Neisseria gonorrhoeae (strain NCCP11945), this protein is 1-(5-phosphoribosyl)-5-[(5-phosphoribosylamino)methylideneamino] imidazole-4-carboxamide isomerase.